Reading from the N-terminus, the 648-residue chain is Beta-glucuronidase (648 aa).

An N-terminal signal peptide occupies residues 1 to 22 (MSPRRSVCWFVLGQLLCSCAVA). Asn172 and Asn416 each carry an N-linked (GlcNAc...) asparagine glycan. Glu447 (proton donor) is an active-site residue. N-linked (GlcNAc...) asparagine glycosylation is present at Asn627.

Belongs to the glycosyl hydrolase 2 family. As to quaternary structure, homotetramer. Undergoes a post-transcriptional proteolytic cleavage near its C-terminal end, which reduces its size by approximately 3 kDa. The site of this cleavage has as yet not been determined.

It is found in the lysosome. The catalysed reaction is a beta-D-glucuronoside + H2O = D-glucuronate + an alcohol. Inhibited by L-aspartic acid. Functionally, plays an important role in the degradation of dermatan and keratan sulfates. This is Beta-glucuronidase (Gusb) from Rattus norvegicus (Rat).